The sequence spans 238 residues: Dolichyldiphosphatase 1 (238 aa).

Helical transmembrane passes span 33-53 (LAYL…LIIF), 100-120 (PSSH…FLYL), 130-150 (FLDL…AFLV), and 162-182 (WSQV…WFIF).

Belongs to the dolichyldiphosphatase family.

The protein resides in the endoplasmic reticulum membrane. The enzyme catalyses a di-trans,poly-cis-dolichyl diphosphate + H2O = a di-trans,poly-cis-dolichyl phosphate + phosphate + H(+). Its pathway is protein modification; protein glycosylation. Its function is as follows. Required for efficient N-glycosylation. Necessary for maintaining optimal levels of dolichol-linked oligosaccharides. Hydrolyzes dolichyl pyrophosphate at a very high rate and dolichyl monophosphate at a much lower rate. Does not act on phosphatidate. This is Dolichyldiphosphatase 1 (DOLPP1) from Callithrix jacchus (White-tufted-ear marmoset).